Here is a 415-residue protein sequence, read N- to C-terminus: Homoserine O-acetyltransferase (415 aa).

One can recognise an AB hydrolase-1 domain in the interval 47-369; sequence NAVLVCHGLT…HGHDAFLVEP (323 aa). The Nucleophile role is filled by S155. A substrate-binding site is contributed by R226. Active-site residues include D329 and H362. D363 lines the substrate pocket. The segment at 387–415 is disordered; the sequence is RAVTDTATDGGEPDEEEDFAPVHSSLFSR.

Belongs to the AB hydrolase superfamily. MetX family. In terms of assembly, homodimer.

It is found in the cytoplasm. The enzyme catalyses L-homoserine + acetyl-CoA = O-acetyl-L-homoserine + CoA. It functions in the pathway amino-acid biosynthesis; L-methionine biosynthesis via de novo pathway; O-acetyl-L-homoserine from L-homoserine: step 1/1. In terms of biological role, transfers an acetyl group from acetyl-CoA to L-homoserine, forming acetyl-L-homoserine. The sequence is that of Homoserine O-acetyltransferase from Haloferax prahovense (strain DSM 18310 / JCM 13924 / TL6).